The following is a 671-amino-acid chain: Copper amine oxidase 1 (671 aa).

An N2 region spans residues 3 to 106; the sequence is PHPLAILSEE…QHRVVGKEHH (104 aa). The interval 107 to 211 is N3; sequence ASLTLSEFDT…DRPATGGKGE (105 aa). 319 to 330 lines the substrate pocket; sequence AFDFGDGGGGNM. Residue aspartate 321 is the Proton acceptor of the active site. Cysteines 340 and 366 form a disulfide. Substrate is bound at residue 402–407; it reads LANYEY. Tyrosine 405 functions as the Schiff-base intermediate with substrate; via topaquinone in the catalytic mechanism. Position 405 is a 2',4',5'-topaquinone (tyrosine 405). Residues histidine 455 and histidine 457 each coordinate Cu cation. Mn(2+) is bound at residue aspartate 464. The N-linked (GlcNAc...) asparagine glycan is linked to asparagine 471. Aspartate 606 contributes to the Mn(2+) binding site. Histidine 617 provides a ligand contact to Cu cation.

Belongs to the copper/topaquinone oxidase family. Homodimer. Requires Cu cation as cofactor. Zn(2+) is required as a cofactor. L-topaquinone serves as cofactor. The cofactor is Mn(2+). In terms of processing, topaquinone (TPQ) is generated by copper-dependent autoxidation of a specific tyrosyl residue.

It carries out the reaction histamine + O2 + H2O = imidazole-4-acetaldehyde + H2O2 + NH4(+). The polypeptide is Copper amine oxidase 1 (AO-I) (Aspergillus niger).